The sequence spans 225 residues: Ribulose-phosphate 3-epimerase (225 aa).

Position 10 (Ser-10) interacts with substrate. The a divalent metal cation site is built by His-35, Asp-37, and His-68. Asp-37 acts as the Proton acceptor in catalysis. Residues His-68, 144 to 147 (GFGG), and 175 to 177 (DGG) contribute to the substrate site. Asp-175 is an a divalent metal cation binding site. Asp-175 (proton donor) is an active-site residue.

This sequence belongs to the ribulose-phosphate 3-epimerase family. A divalent metal cation serves as cofactor.

The enzyme catalyses D-ribulose 5-phosphate = D-xylulose 5-phosphate. Its pathway is carbohydrate degradation. Catalyzes the reversible epimerization of D-ribulose 5-phosphate to D-xylulose 5-phosphate. This chain is Ribulose-phosphate 3-epimerase, found in Rhodospirillum rubrum.